Here is a 301-residue protein sequence, read N- to C-terminus: Ribonuclease HIII (301 aa).

In terms of domain architecture, RNase H type-2 spans 88 to 301 (WSVLGSDEVG…TQKARQLARQ (214 aa)). The a divalent metal cation site is built by D94, E95, and D197.

Belongs to the RNase HII family. RnhC subfamily. Mn(2+) serves as cofactor. Requires Mg(2+) as cofactor.

It localises to the cytoplasm. The enzyme catalyses Endonucleolytic cleavage to 5'-phosphomonoester.. In terms of biological role, endonuclease that specifically degrades the RNA of RNA-DNA hybrids. The protein is Ribonuclease HIII of Limosilactobacillus fermentum (strain NBRC 3956 / LMG 18251) (Lactobacillus fermentum).